The chain runs to 341 residues: Ribosomal RNA small subunit methyltransferase H (341 aa).

S-adenosyl-L-methionine is bound by residues 47–49 (GGY), Asp64, Phe91, Asp109, and Gln116.

It belongs to the methyltransferase superfamily. RsmH family.

It is found in the cytoplasm. The catalysed reaction is cytidine(1402) in 16S rRNA + S-adenosyl-L-methionine = N(4)-methylcytidine(1402) in 16S rRNA + S-adenosyl-L-homocysteine + H(+). In terms of biological role, specifically methylates the N4 position of cytidine in position 1402 (C1402) of 16S rRNA. This is Ribosomal RNA small subunit methyltransferase H from Rhizobium leguminosarum bv. trifolii (strain WSM2304).